Here is a 490-residue protein sequence, read N- to C-terminus: Cytochrome P450 71A21 (490 aa).

A helical transmembrane segment spans residues 1-21 (MESMTMIILQSLIIFITILFF). Residue cysteine 432 coordinates heme.

This sequence belongs to the cytochrome P450 family. The cofactor is heme.

It is found in the membrane. This Arabidopsis thaliana (Mouse-ear cress) protein is Cytochrome P450 71A21 (CYP71A21).